Reading from the N-terminus, the 566-residue chain is DNA ligase B (566 aa).

Lysine 125 functions as the N6-AMP-lysine intermediate in the catalytic mechanism.

Belongs to the NAD-dependent DNA ligase family. LigB subfamily.

The catalysed reaction is NAD(+) + (deoxyribonucleotide)n-3'-hydroxyl + 5'-phospho-(deoxyribonucleotide)m = (deoxyribonucleotide)n+m + AMP + beta-nicotinamide D-nucleotide.. Catalyzes the formation of phosphodiester linkages between 5'-phosphoryl and 3'-hydroxyl groups in double-stranded DNA using NAD as a coenzyme and as the energy source for the reaction. The sequence is that of DNA ligase B from Pseudomonas putida (strain GB-1).